Here is a 136-residue protein sequence, read N- to C-terminus: Small ribosomal subunit protein uS8c (136 aa).

Belongs to the universal ribosomal protein uS8 family. In terms of assembly, part of the 30S ribosomal subunit.

It localises to the plastid. In terms of biological role, one of the primary rRNA binding proteins, it binds directly to 16S rRNA central domain where it helps coordinate assembly of the platform of the 30S subunit. This chain is Small ribosomal subunit protein uS8c (rps8), found in Helicosporidium sp. subsp. Simulium jonesii (Green alga).